The following is a 214-amino-acid chain: Germin-like protein 9-3 (214 aa).

The signal sequence occupies residues Met-1–Ala-23. Residues Asn-42, Asn-60, and Asn-69 are each glycosylated (N-linked (GlcNAc...) asparagine). One can recognise a Cupin type-1 domain in the interval Met-59–Gln-202. His-104, His-106, Glu-111, and His-150 together coordinate Mn(2+).

The protein belongs to the germin family. Oligomer (believed to be a pentamer but probably hexamer).

Its subcellular location is the secreted. The protein localises to the extracellular space. The protein resides in the apoplast. Functionally, may play a role in plant defense. Probably has no oxalate oxidase activity even if the active site is conserved. In Oryza sativa subsp. japonica (Rice), this protein is Germin-like protein 9-3.